A 433-amino-acid chain; its full sequence is UDP-N-acetylmuramoylalanine--D-glutamate ligase (433 aa).

ATP is bound at residue 125–131; sequence GTSGKTT.

It belongs to the MurCDEF family.

It localises to the cytoplasm. The catalysed reaction is UDP-N-acetyl-alpha-D-muramoyl-L-alanine + D-glutamate + ATP = UDP-N-acetyl-alpha-D-muramoyl-L-alanyl-D-glutamate + ADP + phosphate + H(+). Its pathway is cell wall biogenesis; peptidoglycan biosynthesis. Functionally, cell wall formation. Catalyzes the addition of glutamate to the nucleotide precursor UDP-N-acetylmuramoyl-L-alanine (UMA). This Nitratidesulfovibrio vulgaris (strain ATCC 29579 / DSM 644 / CCUG 34227 / NCIMB 8303 / VKM B-1760 / Hildenborough) (Desulfovibrio vulgaris) protein is UDP-N-acetylmuramoylalanine--D-glutamate ligase.